The chain runs to 923 residues: MKSDFKFSNLLGTVYRQGNITFSDDGKQLLSPVGNRVSVFDLINNKSFTFEYEHRKNIAAIDLNKQGTLLISIDEDGRAILVNFKARNVLHHFNFKEKCSAVKFSPDGRLFALASGRFLQIWKTPDVNKDRQFAPFVRHRVHAGHFQDITSLTWSQDSRFILTTSKDLSAKIWSVDSEEKNLAATTFNGHRDYVMGAFFSHDQEKIYTVSKDGAVFVWEFTKRPSDDDDNESEDDDKQEEVDISKYSWRITKKHFFYANQAKVKCVTFHPATRLLAVGFTSGEFRLYDLPDFTLIQQLSMGQNPVNTVSVNQTGEWLAFGSSKLGQLLVYEWQSESYILKQQGHFDSTNSLAYSPDGSRVVTASEDGKIKVWDITSGFCLATFEEHTSSVTAVQFAKRGQVMFSSSLDGTVRAWDLIRYRNFRTFTGTERIQFNCLAVDPSGEVVCAGSLDNFDIHVWSVQTGQLLDALSGHEGPVSCLSFSQENSVLASASWDKTIRIWSIFGRSQQVEPIEVYSDVLALSMRPDGKEVAVSTLKGQISIFNIEDAKQVGNIDCRKDIISGRFNQDRFTAKNSERSKFFTTIHYSFDGMAIVAGGNNNSICLYDVPNEVLLKRFIVSRNMALNGTLEFLNSKKMTEAGSLDLIDDAGENSDLEDRIDNSLPGSQRGGDLSTRKMRPEVRVTSVQFSPTANAFAAASTEGLLIYSTNDTILFDPFDLDVDVTPHSTVEALREKQFLNALVMAFRLNEEYLINKVYEAIPIKEIPLVASNIPAIYLPRILKFIGDFAIESQHIEFNLIWIKALLSASGGYINEHKYLFSTAMRSIQRFIVRVAKEVVNTTTDNKYTYRFLVSTDGSMEDGAADDDEVLLKDDADEDNEENEENDVVMESDDEEGWIGFNGKDNKLPLSNENDSSDEEENEKELP.

WD repeat units lie at residues 12–52 (GTVY…TFEY), 53–93 (EHRK…LHHF), 94–132 (NFKE…KDRQ), 144–183 (GHFQ…KNLA), and 189–228 (GHRD…SDDD). 2 positions are modified to phosphoserine: Ser225 and Ser232. 8 WD repeats span residues 258–297 (ANQA…LIQQ), 300–340 (MGQN…YILK), 343–382 (GHFD…CLAT), 385–424 (EHTS…NFRT), 428–470 (TERI…DALS), 471–510 (GHEG…QQVE), 513–552 (EVYS…QVGN), and 575–614 (ERSK…LLKR). Phosphoserine is present on residues Ser651 and Ser664. The tract at residues 653–674 (LEDRIDNSLPGSQRGGDLSTRK) is disordered. Residues 676 to 714 (RPEVRVTSVQFSPTANAFAAASTEGLLIYSTNDTILFDP) form a WD 14 repeat. Acidic residues-rich tracts occupy residues 869–893 (KDDA…DEEG) and 911–923 (DSSD…KELP). The segment at 869–923 (KDDADEDNEENEENDVVMESDDEEGWIGFNGKDNKLPLSNENDSSDEEENEKELP) is disordered. Residues Ser912 and Ser913 each carry the phosphoserine modification.

Belongs to the WD repeat PWP2 family. As to quaternary structure, interacts with snoRNA U3. Interacts with MPP10. Component of the ribosomal small subunit (SSU) processome composed of at least 40 protein subunits and snoRNA U3.

It is found in the nucleus. It localises to the nucleolus. Its function is as follows. Required for bud-site selection and cell separation. Also involved in nucleolar processing of pre-18S ribosomal RNA. The chain is Periodic tryptophan protein 2 (PWP2) from Saccharomyces cerevisiae (strain ATCC 204508 / S288c) (Baker's yeast).